The sequence spans 288 residues: Elongation factor Ts (288 aa).

An involved in Mg(2+) ion dislocation from EF-Tu region spans residues 82-85 (TDFV).

Belongs to the EF-Ts family.

It localises to the cytoplasm. Functionally, associates with the EF-Tu.GDP complex and induces the exchange of GDP to GTP. It remains bound to the aminoacyl-tRNA.EF-Tu.GTP complex up to the GTP hydrolysis stage on the ribosome. This Chlorobium phaeobacteroides (strain BS1) protein is Elongation factor Ts.